The chain runs to 534 residues: MNTVRPIRRALLSVSDKTGILEFAQALHAHGVELLSTGGTARLLAEHGLPVIEASDHTGHPEIMDGRVKTLHPKIHGGILARRGQDEAVMAENNILPIDLVVVNLYPFASTVANPDCTLADAVENIDIGGPTMVRAAAKNHQDVTIVVNASDYARVLAEMKTNQGSTTLKIRFELAVAAFEHTAAYDGMIANYFGNLVAMDADTSDEQQALHQESSFPRTFNSQFIKKQDLRYGENSHQKAAFYVDPQIDEASVASAIQLQGKALSYNNIADTDAALECVKEFDGPACVIVKHANPCGVALGKDLLDAYNRAYQTDPTSAFGGIIAFNGELDAATASAIVERQFVEVIIAPSVSQAARDIVAAKANVRLLECGKWETKTTSLDYKRVNGGLLVQDRDQGMVGLADIKVVSKRQPTEAELKDLLFCWKVAKFVKSNAIVYAKEGMTIGVGAGQMSRVYSAKIAGIKASDEGLVVENSVMASDAFFPFRDGIDAAAAAGISCIIQPGGSIRDEEIIKAADEHGMAMVFTGMRHFRH.

The MGS-like domain maps to 1-148; the sequence is MNTVRPIRRA…KNHQDVTIVV (148 aa).

Belongs to the PurH family.

It carries out the reaction (6R)-10-formyltetrahydrofolate + 5-amino-1-(5-phospho-beta-D-ribosyl)imidazole-4-carboxamide = 5-formamido-1-(5-phospho-D-ribosyl)imidazole-4-carboxamide + (6S)-5,6,7,8-tetrahydrofolate. The catalysed reaction is IMP + H2O = 5-formamido-1-(5-phospho-D-ribosyl)imidazole-4-carboxamide. Its pathway is purine metabolism; IMP biosynthesis via de novo pathway; 5-formamido-1-(5-phospho-D-ribosyl)imidazole-4-carboxamide from 5-amino-1-(5-phospho-D-ribosyl)imidazole-4-carboxamide (10-formyl THF route): step 1/1. It participates in purine metabolism; IMP biosynthesis via de novo pathway; IMP from 5-formamido-1-(5-phospho-D-ribosyl)imidazole-4-carboxamide: step 1/1. The chain is Bifunctional purine biosynthesis protein PurH from Shewanella denitrificans (strain OS217 / ATCC BAA-1090 / DSM 15013).